A 512-amino-acid polypeptide reads, in one-letter code: MEILSLILYTVIFSFLLQFILRSFFRKRYPLPLPPGPKPWPIIGNLVHLGPKPHQSTAAMAQTYGPLMYLKMGFVDVVVAASASVAAQFLKTHDANFSSRPPNSGAEHMAYNYQDLVFAPYGPRWRMLRKICSVHLFSTKALDDFRHVRQDEVKTLTRALASAGQKPVKLGQLLNVCTTNALARVMLGKRVFADGSGDVDPQAAEFKSMVVEMMVVAGVFNIGDFIPQLNWLDIQGVAAKMKKLHARFDAFLTDILEEHKGKIFGEMKDLLSTLISLKNDDADNDGGKLTDTEIKALLLNLFVAGTDTSSSTVEWAIAELIRNPKILAQAQQEIDKVVGRDRLVGELDLAQLTYLEAIVKETFRLHPSTPLSLPRIASESCEINGYFIPKGSTLLLNVWAIARDPNAWADPLEFRPERFLPGGEKPKVDVRGNDFEVIPFGAGRRICAGMNLGIRMVQLMIATLIHAFNWDLVSGQLPEMLNMEEAYGLTLQRADPLVVHPRPRLEAQAYIG.

The chain crosses the membrane as a helical span at residues M1–L21. The Cytoplasmic portion of the chain corresponds to R22–G512. C447 lines the heme pocket.

Belongs to the cytochrome P450 family. It depends on heme as a cofactor. As to expression, high expression in petals and ovaries and to a lower extent in sepals, pedicels, anthers and stems. Not detected in leaves, style or roots.

The protein resides in the endoplasmic reticulum membrane. It carries out the reaction a 3'-unsubstituted flavone + reduced [NADPH--hemoprotein reductase] + O2 = a 3'-hydroxyflavone + oxidized [NADPH--hemoprotein reductase] + H2O + H(+). It participates in secondary metabolite biosynthesis; flavonoid biosynthesis. Its function is as follows. Catalyzes the 3'-hydroxylation of the flavonoid B-ring to the 3',4'-hydroxylated state. Convert naringenin to eriodictyol and dihydrokaempferol to dihydroquercetin. The protein is Flavonoid 3'-monooxygenase (CYP75B2) of Petunia hybrida (Petunia).